Consider the following 206-residue polypeptide: Small ribosomal subunit protein uS5 (206 aa).

Over residues 1-15 (MTDTPTKQEIQSKND) the composition is skewed to polar residues. The interval 1-50 (MTDTPTKQEIQSKNDNVPAATPVEQKKNNRNDRKRNRRGDSKNLERDSDW) is disordered. Over residues 38 to 50 (RGDSKNLERDSDW) the composition is skewed to basic and acidic residues. The S5 DRBM domain maps to 50-113 (WQERVVQIRR…SDGKKNLVRV (64 aa)).

Belongs to the universal ribosomal protein uS5 family. In terms of assembly, part of the 30S ribosomal subunit. Contacts proteins S4 and S8.

Functionally, with S4 and S12 plays an important role in translational accuracy. Its function is as follows. Located at the back of the 30S subunit body where it stabilizes the conformation of the head with respect to the body. The polypeptide is Small ribosomal subunit protein uS5 (Prochlorococcus marinus (strain AS9601)).